A 511-amino-acid polypeptide reads, in one-letter code: Glucans biosynthesis protein G (511 aa).

Residues 1–22 (MMKMRWLSAAVMLTLYTSSSWA) form the signal peptide.

It belongs to the OpgD/OpgG family.

The protein localises to the periplasm. It functions in the pathway glycan metabolism; osmoregulated periplasmic glucan (OPG) biosynthesis. Its function is as follows. Involved in the biosynthesis of osmoregulated periplasmic glucans (OPGs). The sequence is that of Glucans biosynthesis protein G from Shigella dysenteriae serotype 1 (strain Sd197).